We begin with the raw amino-acid sequence, 210 residues long: Adenylate kinase isoenzyme 1 (210 aa).

30–35 (GSGKGT) is an ATP binding site. The NMP stretch occupies residues 50–79 (SSGDLLRDEVKSGSPRGAQLTAIMESGALV). Residues Ser-51, Arg-56, 77–79 (ALV), 107–110 (GYPR), and Gln-114 contribute to the AMP site. Residues 144 to 154 (HRAQTSGRADD) form an LID region. Residue Arg-145 participates in ATP binding. Arg-151 and Arg-162 together coordinate AMP. Gly-190 provides a ligand contact to ATP.

It belongs to the adenylate kinase family. AK1 subfamily. As to quaternary structure, monomer.

Its subcellular location is the cytoplasm. It carries out the reaction AMP + ATP = 2 ADP. Its function is as follows. Catalyzes the reversible transfer of the terminal phosphate group between ATP and AMP. Plays an important role in cellular energy homeostasis and in adenine nucleotide metabolism. The sequence is that of Adenylate kinase isoenzyme 1 from Caenorhabditis elegans.